The sequence spans 553 residues: Putative transport protein YidE (553 aa).

5 consecutive transmembrane segments (helical) span residues 4–24 (IALT…IGNI), 28–48 (GVGF…HFVD), 65–85 (FGLI…FFAS), 95–115 (LFAV…HKIF), and 158–178 (MSYA…MWLM). 2 consecutive RCK C-terminal domains span residues 192 to 276 (KHES…VIGK) and 279 to 361 (DTSL…VVGN). A run of 6 helical transmembrane segments spans residues 371–391 (MLPV…PLFV), 393–413 (GFPV…ALIL), 437–457 (LGIV…FVDT), 464–484 (LSWI…VGLL), 493–513 (YLTL…LAFA), and 533–553 (LVMF…WGMG).

Belongs to the AAE transporter (TC 2.A.81) family. YidE subfamily.

The protein resides in the cell membrane. The sequence is that of Putative transport protein YidE from Salmonella newport (strain SL254).